A 61-amino-acid chain; its full sequence is Defensin-like peptide TXKs2 (61 aa).

The signal sequence occupies residues 1 to 19; that stretch reads MTYAILIIVSLLLISDRIS. The propeptide occupies 20-22; sequence NVV. Disulfide bonds link cysteine 26/cysteine 47, cysteine 33/cysteine 56, and cysteine 37/cysteine 58.

This sequence belongs to the invertebrate defensin family. In terms of tissue distribution, expressed by the venom gland.

The protein localises to the secreted. Functionally, antibacterial protein. The protein is Defensin-like peptide TXKs2 of Olivierus martensii (Manchurian scorpion).